The sequence spans 181 residues: ATP synthase subunit delta (181 aa).

The protein belongs to the ATPase delta chain family. F-type ATPases have 2 components, F(1) - the catalytic core - and F(0) - the membrane proton channel. F(1) has five subunits: alpha(3), beta(3), gamma(1), delta(1), epsilon(1). F(0) has three main subunits: a(1), b(2) and c(10-14). The alpha and beta chains form an alternating ring which encloses part of the gamma chain. F(1) is attached to F(0) by a central stalk formed by the gamma and epsilon chains, while a peripheral stalk is formed by the delta and b chains.

It is found in the cell membrane. Its function is as follows. F(1)F(0) ATP synthase produces ATP from ADP in the presence of a proton or sodium gradient. F-type ATPases consist of two structural domains, F(1) containing the extramembraneous catalytic core and F(0) containing the membrane proton channel, linked together by a central stalk and a peripheral stalk. During catalysis, ATP synthesis in the catalytic domain of F(1) is coupled via a rotary mechanism of the central stalk subunits to proton translocation. This protein is part of the stalk that links CF(0) to CF(1). It either transmits conformational changes from CF(0) to CF(1) or is implicated in proton conduction. This is ATP synthase subunit delta from Shouchella clausii (strain KSM-K16) (Alkalihalobacillus clausii).